Here is a 148-residue protein sequence, read N- to C-terminus: MLNQLTLSLQFGKLENPALHRGALPRHKVARWLRHALQSDAEITVRIVDTEEGQALNRDYRHKDYATNVLTFDYTQEPVVTADLVLCAPVVAQEAKEQGKTLQEHYAHLLVHGALHAQGWDHEAEEDAQVMELRESEIMARLGFENPY.

Residues histidine 112, histidine 116, and histidine 122 each contribute to the Zn(2+) site.

The protein belongs to the endoribonuclease YbeY family. Requires Zn(2+) as cofactor.

It is found in the cytoplasm. Single strand-specific metallo-endoribonuclease involved in late-stage 70S ribosome quality control and in maturation of the 3' terminus of the 16S rRNA. The sequence is that of Endoribonuclease YbeY from Albidiferax ferrireducens (strain ATCC BAA-621 / DSM 15236 / T118) (Rhodoferax ferrireducens).